A 224-amino-acid polypeptide reads, in one-letter code: Proteasome subunit beta (224 aa).

The propeptide at 1-6 is removed in mature form; by autocatalysis; the sequence is MDVMKG. T7 acts as the Nucleophile in catalysis.

This sequence belongs to the peptidase T1B family. The 20S proteasome core is composed of 14 alpha and 14 beta subunits that assemble into four stacked heptameric rings, resulting in a barrel-shaped structure. The two inner rings, each composed of seven catalytic beta subunits, are sandwiched by two outer rings, each composed of seven alpha subunits. The catalytic chamber with the active sites is on the inside of the barrel. Has a gated structure, the ends of the cylinder being occluded by the N-termini of the alpha-subunits. Is capped at one or both ends by the proteasome regulatory ATPase, PAN.

The protein localises to the cytoplasm. The catalysed reaction is Cleavage of peptide bonds with very broad specificity.. The formation of the proteasomal ATPase PAN-20S proteasome complex, via the docking of the C-termini of PAN into the intersubunit pockets in the alpha-rings, triggers opening of the gate for substrate entry. Interconversion between the open-gate and close-gate conformations leads to a dynamic regulation of the 20S proteasome proteolysis activity. In terms of biological role, component of the proteasome core, a large protease complex with broad specificity involved in protein degradation. The sequence is that of Proteasome subunit beta from Methanocaldococcus fervens (strain DSM 4213 / JCM 15782 / AG86) (Methanococcus fervens).